We begin with the raw amino-acid sequence, 361 residues long: Septin-12 (361 aa).

The 272-residue stretch at 45 to 316 folds into the Septin-type G domain; that stretch reads MGFEFNIMVV…ENYRIIRLKE (272 aa). Residues 45-318 form an interaction with SEPTIN7 region; sequence MGFEFNIMVV…YRIIRLKESH (274 aa). Residues 55–62 are G1 motif; the sequence is GQSGLGKS. GTP is bound by residues 55-62, Thr-88, Gly-114, 194-202, Gly-250, and Arg-265; these read GQSGLGKS and RADSLTIEE. The segment at 111–114 is G3 motif; it reads DTPG. The interval 193–196 is G4 motif; it reads ARAD. Positions 257–361 are self-association (via N-terminus) to polymerize octameric septin 12-7-6-2/4-2/4-6-7-12 filaments; sequence VNGRCVLGRK…WAEDNSDEDF (105 aa). The interval 333–361 is disordered; the sequence is PPPAPTGTRASPGPAKMCRWAEDNSDEDF. A compositionally biased stretch (low complexity) spans 338–347; it reads TGTRASPGPA.

Belongs to the TRAFAC class TrmE-Era-EngA-EngB-Septin-like GTPase superfamily. Septin GTPase family. In terms of assembly, septins polymerize into heterooligomeric protein complexes that form filaments, and can associate with cellular membranes, actin filaments and microtubules. GTPase activity is required for filament formation. Interacts with SEPTIN6 and SEPTIN11. Component of a octameric complex consisting of SEPTIN12, SEPTIN7, SEPTIN6 and SEPTIN2 or SEPTIN4 in the order 12-7-6-2-2-6-7-12 or 12-7-6-4-4-6-7-12 and located in the sperm annulus; the octamer polymerizes into filaments via the SEPTIN12 N- and C-termini; the SEPTIN12:SEPTIN7 association is mediated by the GTP-binding domains. Interacts with SPAG4 and LMNB1. Associates with alpha- and beta-tubulins.

Its subcellular location is the cytoplasm. It is found in the cytoskeleton. It localises to the spindle. The protein resides in the cell projection. The protein localises to the cilium. Its subcellular location is the flagellum. Functionally, filament-forming cytoskeletal GTPase. May play a role in cytokinesis (Potential). Involved in spermatogenesis. Involved in the morphogenesis of sperm heads and the elongation of sperm tails probably implicating the association with alpha- and beta-tubulins. Forms a filamentous structure with SEPTIN7, SEPTIN6, SEPTIN2 and probably SEPTIN4 at the sperm annulus which is required for the structural integrity and motility of the sperm tail during postmeiotic differentiation. The polypeptide is Septin-12 (Bos taurus (Bovine)).